A 515-amino-acid polypeptide reads, in one-letter code: 1-pyrroline-5-carboxylate dehydrogenase (515 aa).

Residues Glu-286 and Cys-320 contribute to the active site.

The protein belongs to the aldehyde dehydrogenase family. RocA subfamily.

It carries out the reaction L-glutamate 5-semialdehyde + NAD(+) + H2O = L-glutamate + NADH + 2 H(+). It functions in the pathway amino-acid degradation; L-proline degradation into L-glutamate; L-glutamate from L-proline: step 2/2. In Bacillus subtilis (strain 168), this protein is 1-pyrroline-5-carboxylate dehydrogenase (rocA).